The primary structure comprises 179 residues: Large ribosomal subunit protein uL6 (179 aa).

It belongs to the universal ribosomal protein uL6 family. In terms of assembly, part of the 50S ribosomal subunit.

Its function is as follows. This protein binds to the 23S rRNA, and is important in its secondary structure. It is located near the subunit interface in the base of the L7/L12 stalk, and near the tRNA binding site of the peptidyltransferase center. In Rippkaea orientalis (strain PCC 8801 / RF-1) (Cyanothece sp. (strain PCC 8801)), this protein is Large ribosomal subunit protein uL6.